An 82-amino-acid chain; its full sequence is Exodeoxyribonuclease 7 small subunit (82 aa).

This sequence belongs to the XseB family. Heterooligomer composed of large and small subunits.

The protein resides in the cytoplasm. The enzyme catalyses Exonucleolytic cleavage in either 5'- to 3'- or 3'- to 5'-direction to yield nucleoside 5'-phosphates.. Functionally, bidirectionally degrades single-stranded DNA into large acid-insoluble oligonucleotides, which are then degraded further into small acid-soluble oligonucleotides. This chain is Exodeoxyribonuclease 7 small subunit, found in Pectobacterium carotovorum subsp. carotovorum (strain PC1).